Reading from the N-terminus, the 294-residue chain is Cytidine deaminase (294 aa).

CMP/dCMP-type deaminase domains follow at residues 48 to 168 (DDNT…FGPN) and 187 to 294 (ETTD…YYTF). Position 89–91 (89–91 (NME)) interacts with substrate. His102 provides a ligand contact to Zn(2+). The active-site Proton donor is the Glu104. The Zn(2+) site is built by Cys129 and Cys132.

It belongs to the cytidine and deoxycytidylate deaminase family. Homodimer. Zn(2+) is required as a cofactor.

The enzyme catalyses cytidine + H2O + H(+) = uridine + NH4(+). It catalyses the reaction 2'-deoxycytidine + H2O + H(+) = 2'-deoxyuridine + NH4(+). This enzyme scavenges exogenous and endogenous cytidine and 2'-deoxycytidine for UMP synthesis. The sequence is that of Cytidine deaminase from Photorhabdus laumondii subsp. laumondii (strain DSM 15139 / CIP 105565 / TT01) (Photorhabdus luminescens subsp. laumondii).